We begin with the raw amino-acid sequence, 2496 residues long: Non-reducing polyketide synthase adrD (2496 aa).

The segment at 15 to 254 (LVFGPQIAEI…HHASHITAVQ (240 aa)) is N-terminal acylcarrier protein transacylase domain (SAT). The Ketosynthase family 3 (KS3) domain maps to 387-808 (ATPIAITGMG…GSNAALVVKQ (422 aa)). Active-site for beta-ketoacyl synthase activity residues include Cys552, His687, and His726. The segment at 914–1223 (LCFGGQNGNE…QSLDLGGPQG (310 aa)) is malonyl-CoA:ACP transacylase (MAT) domain. Residue Ser1001 is the For acyl/malonyl transferase activity of the active site. Positions 1295-1423 (KEFVQLLTKQ…GEISLHPFGQ (129 aa)) are N-terminal hotdog fold. Residues 1295–1602 (KEFVQLLTKQ…FTSVSIAGLA (308 aa)) form the PKS/mFAS DH domain. Positions 1296–1601 (EFVQLLTKQP…EFTSVSIAGL (306 aa)) are product template (PT) domain. Catalysis depends on His1326, which acts as the Proton acceptor; for dehydratase activity. The tract at residues 1451–1602 (ESSGLKGFAV…FTSVSIAGLA (152 aa)) is C-terminal hotdog fold. The active-site Proton donor; for dehydratase activity is the Asp1509. Basic and acidic residues predominate over residues 1615–1629 (EKASPDLSLRNDSKV). Residues 1615–1645 (EKASPDLSLRNDSKVDVNPTPQNTAPVVQPT) are disordered. The segment covering 1633–1645 (PTPQNTAPVVQPT) has biased composition (polar residues). The 75-residue stretch at 1652-1726 (PGYFVVVQEM…ALVQTIFPDA (75 aa)) folds into the Carrier domain. At Ser1686 the chain carries O-(pantetheine 4'-phosphoryl)serine. A methyltransferase (CMeT) domain region spans residues 1888 to 2121 (QHRSEHHLLK…GFQWVDWTHN (234 aa)). Positions 2151–2496 (RVMNEETVPY…YEFLRDHVRY (346 aa)) are thioesterase (TE) domain. Active-site for thioesterase activity residues include Ser2274 and Asp2433.

The catalysed reaction is 3 malonyl-CoA + acetyl-CoA + 2 S-adenosyl-L-methionine = 3,5-dimethylorsellinate + 2 S-adenosyl-L-homocysteine + 3 CO2 + 4 CoA. It participates in secondary metabolite biosynthesis; terpenoid biosynthesis. Functionally, non-reducing polyketide synthase; part of the gene cluster that mediates the biosynthesis of andrastins, meroterpenoid compounds that exhibit inhibitory activity against ras farnesyltransferase, suggesting that they could be promising leads for antitumor agents. The first step of the pathway is the synthesis of 3,5-dimethylorsellinic acid (DMOA) by the polyketide synthase adrD via condensation of one acetyl-CoA starter unit with 3 malonyl-CoA units and 2 methylations. DMAO is then converted to farnesyl-DMAO by the prenyltransferase adrG. The methyltransferase adrK catalyzes the methylation of the carboxyl group of farnesyl-DMAO to farnesyl-DMAO methyl ester which is further converted to epoxyfarnesyl-DMAO methyl ester by the FAD-dependent monooxygenase adrH. The terpene cyclase adrI then catalyzes the carbon skeletal rearrangement to generate the andrastin E, the first compound in the pathway having the andrastin scaffold, with the tetracyclic ring system. The post-cyclization tailoring enzymes adrF, adrE, adrJ, and adrA, are involved in the conversion of andrastin E into andrastin A. The short chain dehydrogenase adrF is responsible for the oxidation of the C-3 a hydroxyl group of andrastin E to yield the corresponding ketone, andrastin D. The ketoreductase adrE stereoselectively reduces the carbonyl moiety to reverse the stereochemistry of the C-3 position to yield andrastin F. The acetyltransferase adrJ is the acetyltransferase that attaches the acetyl group to the C-3 hydroxyl group of andrastin F to yield andrastin C. Finally, the cytochrome P450 monooxygenase adrA catalyzes two sequential oxidation reactions of the C-23 methyl group, to generate the corresponding alcohol andrastin B, and aldehyde andrastin A. This is Non-reducing polyketide synthase adrD from Penicillium rubens (strain ATCC 28089 / DSM 1075 / NRRL 1951 / Wisconsin 54-1255) (Penicillium chrysogenum).